We begin with the raw amino-acid sequence, 181 residues long: Probable cobalt-precorrin-6B C(15)-methyltransferase (decarboxylating) (181 aa).

S-adenosyl-L-methionine contacts are provided by residues threonine 16, 40–44 (GCGSG), aspartate 61, and alanine 89.

It belongs to the methyltransferase superfamily. Archaeal-type CbiT family.

It carries out the reaction Co-precorrin-6B + S-adenosyl-L-methionine = Co-precorrin-7 + S-adenosyl-L-homocysteine + CO2. The protein operates within cofactor biosynthesis; adenosylcobalamin biosynthesis; cob(II)yrinate a,c-diamide from sirohydrochlorin (anaerobic route): step 8/10. Its function is as follows. Catalyzes the methylation of C-15 in cobalt-precorrin-6B followed by the decarboxylation of C-12 to form cobalt-precorrin-7. The protein is Probable cobalt-precorrin-6B C(15)-methyltransferase (decarboxylating) of Methanococcus maripaludis (strain C6 / ATCC BAA-1332).